The sequence spans 380 residues: MKNFVFTSESVSEGHPDKIADQISDAVLDEILKHDPNGRVACETFVTTGLVLVGGEITTNTYVDIEQVVRNKIQEIGYNNPNYGFDGSCCAVISSIIKQSPDIAMGIDNENEEEIGAGDQGMVFGYACNETKSLMPAPIYYAHLLMKRQAYLRKQNILSWLRPDAKSQVTLRYENNKPIVIDSVVLSTQHHPEIQQKDLIEAVIEEIIKPTLPTNLLHKDTKYLINPTGRFVIGGPVADCGLTGRKIIVDSYGGMAKHGGGCFSGKDPTKIDRSAAYMARYIAKNIVGAGLADRCEIQISYAIGVADPVSVYAETFGTSKLSNEQTTKLITEHFDMRPGKIIKNLKLHTQCYQKTATYGHFGREDENFTWEQLDKVDIFK.

His-15 provides a ligand contact to ATP. Asp-17 contributes to the Mg(2+) binding site. Glu-43 contacts K(+). Residues Glu-56 and Gln-99 each contribute to the L-methionine site. A flexible loop region spans residues 99–109; sequence QSPDIAMGIDN. ATP is bound by residues 164 to 166, 230 to 231, Asp-239, 245 to 246, and Lys-266; these read DAK, RF, and RK. Asp-239 contacts L-methionine. L-methionine is bound at residue Lys-270.

This sequence belongs to the AdoMet synthase family. As to quaternary structure, homotetramer; dimer of dimers. The cofactor is Mg(2+). Requires K(+) as cofactor.

It is found in the cytoplasm. The catalysed reaction is L-methionine + ATP + H2O = S-adenosyl-L-methionine + phosphate + diphosphate. Its pathway is amino-acid biosynthesis; S-adenosyl-L-methionine biosynthesis; S-adenosyl-L-methionine from L-methionine: step 1/1. Functionally, catalyzes the formation of S-adenosylmethionine (AdoMet) from methionine and ATP. The overall synthetic reaction is composed of two sequential steps, AdoMet formation and the subsequent tripolyphosphate hydrolysis which occurs prior to release of AdoMet from the enzyme. This is S-adenosylmethionine synthase from Rickettsia prowazekii (strain Madrid E).